Here is a 143-residue protein sequence, read N- to C-terminus: uncharacterized protein (143 aa).

Positions 5-137 (DARLASDLSL…LRSAADLMLA (133 aa)) constitute an HTH marR-type domain. The segment at residues 51–74 (PGALAIRERVRPPSMTRVIASLAD) is a DNA-binding region (H-T-H motif).

In terms of assembly, homodimer.

This is an uncharacterized protein from Mycobacterium bovis (strain ATCC BAA-935 / AF2122/97).